The following is a 695-amino-acid chain: Potassium voltage-gated channel subfamily KQT member 4 (695 aa).

The segment at 1 to 21 (MAEAPPRRLGLGPPPGDAPRA) is disordered. Residues 1-96 (MAEAPPRRLG…VYNVLERPRG (96 aa)) lie on the Cytoplasmic side of the membrane. A 1,2-diacyl-sn-glycero-3-phospho-(1D-myo-inositol-4,5-bisphosphate) is bound at residue Arg-93. Residues 97-118 (WAFVYHVFIFLLVFSCLVLSVL) form a helical membrane-spanning segment. The Extracellular segment spans residues 119 to 129 (STIQEHQELAN). The helical transmembrane segment at 130–152 (ECLLILEFVMIVVFGLEYIVRVW) threads the bilayer. The Cytoplasmic portion of the chain corresponds to 153–168 (SAGCCCRYRGWQGRFR). The chain crosses the membrane as a helical span at residues 169–191 (FARKPFCVIDFIVFVASVAVIAA). Residue Lys-172 participates in a 1,2-diacyl-sn-glycero-3-phospho-(1D-myo-inositol-4,5-bisphosphate) binding. Topologically, residues 192 to 202 (GTQGNIFATSA) are extracellular. A helical; Voltage-sensor membrane pass occupies residues 203–223 (LRSMRFLQILRMVRMDRRGGT). Arg-219, Arg-220, Lys-225, and Ser-235 together coordinate a 1,2-diacyl-sn-glycero-3-phospho-(1D-myo-inositol-4,5-bisphosphate). The Cytoplasmic segment spans residues 224–235 (WKLLGSVVYAHS). The helical transmembrane segment at 236 to 258 (KELITAWYIGFLVLIFASFLVYL) threads the bilayer. Residues 259–270 (AEKDANSDFSSY) are Extracellular-facing. Positions 271 to 292 (ADSLWWGTITLTTIGYGDKTPH) form an intramembrane region, pore-forming. Residue Thr-293 is a topological domain, extracellular. The helical transmembrane segment at 294 to 322 (WLGRVLAAGFALLGISFFALPAGILGSGF) threads the bilayer. Topologically, residues 323–695 (ALKVQEQHRQ…ISRSVSTNMD (373 aa)) are cytoplasmic. A 1,2-diacyl-sn-glycero-3-phospho-(1D-myo-inositol-4,5-bisphosphate) is bound by residues His-330 and Lys-333. Positions 342 to 351 (AANLIQAAWR) are interaction with CALM. 2 disordered regions span residues 400-480 (RRAP…TKVQ) and 496-515 (RLKPRTSAEDAPSEEVAEEK). 2 stretches are compositionally biased toward polar residues: residues 443-452 (GSSQRRTGPS) and 463-480 (TSPSSEQVGEATSPTKVQ). An interaction with CALM region spans residues 535–549 (RSIRILKFLVAKRKF). The interval 546–650 (KRKFKETLRP…SRCLRSGTSA (105 aa)) is C-terminal assembly domain (tetramerization). A disordered region spans residues 587-606 (VGRGPGDRKAREKGDKGPSD). The span at 591-605 (PGDRKAREKGDKGPS) shows a compositional bias: basic and acidic residues. Residues 615–636 (MMGRVVKVEKQVQSIEHKLDLL) adopt a coiled-coil conformation.

It belongs to the potassium channel family. KQT (TC 1.A.1.15) subfamily. Kv7.4/KCNQ4 sub-subfamily. In terms of assembly, homotetramer. Interacts (via C-terminus) with calmodulin; forms a heterooctameric structure (with 4:4 KCNQ1:CALM stoichiometry); the interaction is calcium-independent, constitutive, participates in the proper assembly of a functional channel. The interaction with calcium-free CALM controls channel trafficking whereas interaction with calcium-bound CALM regulates channel gating. May form a functional heteromultimeric channel with KCNQ3. Interacts with HSP90AB1; promotes cell surface expression of KCNQ4. In terms of tissue distribution, expressed in the outer, but not the inner, sensory hair cells of the cochlea. Slightly expressed in heart, brain and skeletal muscle.

It is found in the basal cell membrane. The enzyme catalyses K(+)(in) = K(+)(out). With respect to regulation, two molecules of phosphatidylinositol-4,5-bisphosphate (PIP2-I and PIP2-II) are essential to activate KCNQ4 channel by inducing the coupling of the voltage-sensing domain (VSD) and the pore-forming domain (PD). Upon channel activation, PIP2-I and PIP2-II disrupt the VSD-calmodulin/CALM interaction, causing the release of CALM from the VSD which triggers the opening of the gate. Calcium suppresses KCNQ4 channel current through calcium-bound CALM C-terminus. Therefore CALM acts as calcium sensor that controls channel activity. ML213 potentiates KCNQ4 channel. KCNQ4 channel is blocked by linopirdin, XE991 and bepridil, whereas clofilium is without significant effect. Muscarinic agonist oxotremorine-M strongly suppress KCNQ4 current in CHO cells in which cloned KCNQ4 channels were coexpressed with M1 muscarinic receptors. In terms of biological role, pore-forming subunit of the voltage-gated potassium (Kv) channel involved in the regulation of sensory cells excitability in the cochlea. KCNQ4/Kv7.4 channel is composed of 4 pore-forming subunits assembled as tetramers. Promotes the outflow of potassium ions in the repolarization phase of action potential which plays a role in regulating membrane potential of excitable cells. The channel conducts a slowly activating and deactivating current. Current often shows some inward rectification at positive potentials. Channel may be selectively permeable in vitro to other cations besides potassium, in decreasing order of affinity K(+) = Rb(+) &gt; Cs(+) &gt; Na(+). Important for normal physiological function of inner ear such as sensory perception of sound. This Homo sapiens (Human) protein is Potassium voltage-gated channel subfamily KQT member 4.